Here is a 205-residue protein sequence, read N- to C-terminus: Ribosomal RNA small subunit methyltransferase J (205 aa).

S-adenosyl-L-methionine is bound by residues 56 to 57 (RD), 72 to 73 (ER), and aspartate 124.

Belongs to the methyltransferase superfamily. RsmJ family.

Its subcellular location is the cytoplasm. It carries out the reaction guanosine(1516) in 16S rRNA + S-adenosyl-L-methionine = N(2)-methylguanosine(1516) in 16S rRNA + S-adenosyl-L-homocysteine + H(+). Its function is as follows. Specifically methylates the guanosine in position 1516 of 16S rRNA. This Brucella anthropi (strain ATCC 49188 / DSM 6882 / CCUG 24695 / JCM 21032 / LMG 3331 / NBRC 15819 / NCTC 12168 / Alc 37) (Ochrobactrum anthropi) protein is Ribosomal RNA small subunit methyltransferase J.